The chain runs to 158 residues: Pathogenesis-related protein 1 (158 aa).

The protein belongs to the BetVI family.

The protein localises to the cytoplasm. The sequence is that of Pathogenesis-related protein 1 (PR1) from Asparagus officinalis (Garden asparagus).